We begin with the raw amino-acid sequence, 265 residues long: Small ribosomal subunit protein uS3 (265 aa).

One can recognise a KH type-2 domain in the interval isoleucine 39–arginine 111. The tract at residues phenylalanine 224 to lysine 250 is disordered. Over residues arginine 238 to lysine 250 the composition is skewed to basic and acidic residues.

Belongs to the universal ribosomal protein uS3 family. Part of the 30S ribosomal subunit. Forms a tight complex with proteins S10 and S14.

Binds the lower part of the 30S subunit head. Binds mRNA in the 70S ribosome, positioning it for translation. The sequence is that of Small ribosomal subunit protein uS3 from Acholeplasma laidlawii.